The chain runs to 607 residues: Elongation factor 4 (607 aa).

One can recognise a tr-type G domain in the interval glutamate 11–threonine 193. GTP contacts are provided by residues aspartate 23–threonine 28 and asparagine 140–aspartate 143.

Belongs to the TRAFAC class translation factor GTPase superfamily. Classic translation factor GTPase family. LepA subfamily.

It localises to the cell membrane. The catalysed reaction is GTP + H2O = GDP + phosphate + H(+). Its function is as follows. Required for accurate and efficient protein synthesis under certain stress conditions. May act as a fidelity factor of the translation reaction, by catalyzing a one-codon backward translocation of tRNAs on improperly translocated ribosomes. Back-translocation proceeds from a post-translocation (POST) complex to a pre-translocation (PRE) complex, thus giving elongation factor G a second chance to translocate the tRNAs correctly. Binds to ribosomes in a GTP-dependent manner. The sequence is that of Elongation factor 4 from Streptococcus pneumoniae (strain Hungary19A-6).